The sequence spans 188 residues: dCTP deaminase (188 aa).

DCTP is bound by residues 111 to 116 (KSTYAR), 135 to 137 (TLE), Gln156, Tyr170, and Gln180. The active-site Proton donor/acceptor is the Glu137.

It belongs to the dCTP deaminase family. As to quaternary structure, homotrimer.

It catalyses the reaction dCTP + H2O + H(+) = dUTP + NH4(+). It participates in pyrimidine metabolism; dUMP biosynthesis; dUMP from dCTP (dUTP route): step 1/2. Functionally, catalyzes the deamination of dCTP to dUTP. In Nitrosomonas eutropha (strain DSM 101675 / C91 / Nm57), this protein is dCTP deaminase.